We begin with the raw amino-acid sequence, 313 residues long: Ribosomal RNA small subunit methyltransferase H (313 aa).

S-adenosyl-L-methionine contacts are provided by residues 35–37 (GGH), D55, F79, D100, and Q107.

This sequence belongs to the methyltransferase superfamily. RsmH family.

It localises to the cytoplasm. It catalyses the reaction cytidine(1402) in 16S rRNA + S-adenosyl-L-methionine = N(4)-methylcytidine(1402) in 16S rRNA + S-adenosyl-L-homocysteine + H(+). Functionally, specifically methylates the N4 position of cytidine in position 1402 (C1402) of 16S rRNA. The protein is Ribosomal RNA small subunit methyltransferase H of Burkholderia vietnamiensis (strain G4 / LMG 22486) (Burkholderia cepacia (strain R1808)).